We begin with the raw amino-acid sequence, 1058 residues long: Ubiquitin-like modifier-activating enzyme 1 (1058 aa).

Residues 1–46 (MSSSPLSKKRRVSGPDPKPGSNCSPAQSALSEVSSVPTNGMAKNGS) form a disordered region. At Ser-2 the chain carries N-acetylserine. Phosphoserine is present on residues Ser-4, Ser-13, Ser-21, Ser-24, and Ser-46. Over residues 21–38 (SNCSPAQSALSEVSSVPT) the composition is skewed to polar residues. Tyr-55 carries the post-translational modification Phosphotyrosine. 2 tandem repeats follow at residues 63–199 (GHEA…GQLF) and 459–611 (GSDF…QVVI). The tract at residues 63 to 611 (GHEAMKMLQT…GTKGNVQVVI (549 aa)) is 2 approximate repeats. ATP contacts are provided by residues Ala-478, Asp-504, Arg-515, Lys-528, and 576–577 (DN). An N6-succinyllysine modification is found at Lys-528. The active-site Glycyl thioester intermediate is Cys-632. Lys-671 carries the N6-acetyllysine modification. Thr-800 carries the phosphothreonine modification. Phosphoserine is present on residues Ser-810, Ser-816, Ser-820, and Ser-835. Position 980 is an N6-acetyllysine (Lys-980).

Belongs to the ubiquitin-activating E1 family. Monomer. Interacts with GAN (via BTB domain). In terms of processing, ISGylated. Ubiquitously expressed. In testis, expressed in A spermatogonia and spermatids but at very low levels in pachytene spermatocytes.

It is found in the cytoplasm. The protein localises to the mitochondrion. Its subcellular location is the nucleus. The catalysed reaction is ATP + ubiquitin + [E1 ubiquitin-activating enzyme]-L-cysteine = AMP + diphosphate + S-ubiquitinyl-[E1 ubiquitin-activating enzyme]-L-cysteine.. The protein operates within protein modification; protein ubiquitination. Its function is as follows. Catalyzes the first step in ubiquitin conjugation to mark cellular proteins for degradation through the ubiquitin-proteasome system. Activates ubiquitin by first adenylating its C-terminal glycine residue with ATP, and thereafter linking this residue to the side chain of a cysteine residue in E1, yielding a ubiquitin-E1 thioester and free AMP. Essential for the formation of radiation-induced foci, timely DNA repair and for response to replication stress. Promotes the recruitment of TP53BP1 and BRCA1 at DNA damage sites. The protein is Ubiquitin-like modifier-activating enzyme 1 (Uba1) of Mus musculus (Mouse).